Reading from the N-terminus, the 258-residue chain is Pyridoxine 5'-phosphate synthase (258 aa).

N16 contacts 3-amino-2-oxopropyl phosphate. 18–19 (DH) lines the 1-deoxy-D-xylulose 5-phosphate pocket. R27 is a binding site for 3-amino-2-oxopropyl phosphate. H52 (proton acceptor) is an active-site residue. 1-deoxy-D-xylulose 5-phosphate contacts are provided by R54 and H59. Catalysis depends on E79, which acts as the Proton acceptor. A 1-deoxy-D-xylulose 5-phosphate-binding site is contributed by T109. The active-site Proton donor is H200. Residues G201 and 222–223 (GH) contribute to the 3-amino-2-oxopropyl phosphate site.

This sequence belongs to the PNP synthase family. As to quaternary structure, homooctamer; tetramer of dimers.

The protein localises to the cytoplasm. The catalysed reaction is 3-amino-2-oxopropyl phosphate + 1-deoxy-D-xylulose 5-phosphate = pyridoxine 5'-phosphate + phosphate + 2 H2O + H(+). It functions in the pathway cofactor biosynthesis; pyridoxine 5'-phosphate biosynthesis; pyridoxine 5'-phosphate from D-erythrose 4-phosphate: step 5/5. Catalyzes the complicated ring closure reaction between the two acyclic compounds 1-deoxy-D-xylulose-5-phosphate (DXP) and 3-amino-2-oxopropyl phosphate (1-amino-acetone-3-phosphate or AAP) to form pyridoxine 5'-phosphate (PNP) and inorganic phosphate. This is Pyridoxine 5'-phosphate synthase from Burkholderia lata (strain ATCC 17760 / DSM 23089 / LMG 22485 / NCIMB 9086 / R18194 / 383).